The following is a 315-amino-acid chain: tRNA-dihydrouridine(16) synthase (315 aa).

FMN-binding positions include 7–9 and Gln68; that span reads PME. Cys98 acts as the Proton donor in catalysis. Residues Lys139, 200-202, and 224-225 each bind FMN; these read NGE and GR.

The protein belongs to the Dus family. DusC subfamily. The cofactor is FMN.

The catalysed reaction is 5,6-dihydrouridine(16) in tRNA + NADP(+) = uridine(16) in tRNA + NADPH + H(+). The enzyme catalyses 5,6-dihydrouridine(16) in tRNA + NAD(+) = uridine(16) in tRNA + NADH + H(+). Its function is as follows. Catalyzes the synthesis of 5,6-dihydrouridine (D), a modified base found in the D-loop of most tRNAs, via the reduction of the C5-C6 double bond in target uridines. DusC specifically modifies U16 in tRNAs. The protein is tRNA-dihydrouridine(16) synthase of Escherichia coli (strain K12).